The primary structure comprises 221 residues: Cysteine protease inhibitor 8 (221 aa).

The signal sequence occupies residues 1 to 26 (IPSINILSFLLLSSTLSLVAFARSFT). The propeptide occupies 27 to 42 (SENPIVLPTTCHDDDN). Positions 29–34 (NPIVLP) match the Vacuolar targeting signal motif. 2 disulfides stabilise this stretch: Cys-84–Cys-136 and Cys-184–Cys-190.

It belongs to the protease inhibitor I3 (leguminous Kunitz-type inhibitor) family.

It localises to the vacuole. Functionally, inhibitor of cysteine proteases. May protect the plant by inhibiting proteases of invading organisms. In Solanum tuberosum (Potato), this protein is Cysteine protease inhibitor 8.